A 403-amino-acid chain; its full sequence is Ribosomal RNA large subunit methyltransferase I (403 aa).

The 80-residue stretch at 9-88 (YPRLILSKGR…ESIDIAFFTR (80 aa)) folds into the PUA domain.

Belongs to the methyltransferase superfamily. RlmI family.

It localises to the cytoplasm. It carries out the reaction cytidine(1962) in 23S rRNA + S-adenosyl-L-methionine = 5-methylcytidine(1962) in 23S rRNA + S-adenosyl-L-homocysteine + H(+). In terms of biological role, specifically methylates the cytosine at position 1962 (m5C1962) of 23S rRNA. The polypeptide is Ribosomal RNA large subunit methyltransferase I (Salmonella paratyphi C (strain RKS4594)).